Consider the following 339-residue polypeptide: DNA-directed RNA polymerase subunit alpha (339 aa).

Positions 1–235 (MTIQKNWQEL…DQLNVFVNFE (235 aa)) are alpha N-terminal domain (alpha-NTD). The segment at 251–339 (FNPAFLKKVD…ELAKRFEDHY (89 aa)) is alpha C-terminal domain (alpha-CTD).

It belongs to the RNA polymerase alpha chain family. As to quaternary structure, homodimer. The RNAP catalytic core consists of 2 alpha, 1 beta, 1 beta' and 1 omega subunit. When a sigma factor is associated with the core the holoenzyme is formed, which can initiate transcription.

The catalysed reaction is RNA(n) + a ribonucleoside 5'-triphosphate = RNA(n+1) + diphosphate. In terms of biological role, DNA-dependent RNA polymerase catalyzes the transcription of DNA into RNA using the four ribonucleoside triphosphates as substrates. The polypeptide is DNA-directed RNA polymerase subunit alpha (Rhodopseudomonas palustris (strain HaA2)).